The primary structure comprises 255 residues: Very-long-chain (3R)-3-hydroxyacyl-CoA dehydratase 2 (255 aa).

At 3–42 (AAAAATAAAKGNGGGGGRAGAGDASGTRKKKGPGPLATAY) the chain is on the cytoplasmic side. The tract at residues 11 to 34 (AKGNGGGGGRAGAGDASGTRKKKG) is disordered. Over residues 13–22 (GNGGGGGRAG) the composition is skewed to gly residues. A helical membrane pass occupies residues 43 to 61 (LVIYNVVMTAGWLVIAVGL). Over 62 to 80 (VRAYLAKGSYHSLYYSIEK) the chain is Lumenal. Residues 81–98 (PLKFFQTGALLEILHCAI) traverse the membrane as a helical segment. Over 99-108 (GIVPSSVVLT) the chain is Cytoplasmic. A helical transmembrane segment spans residues 109 to 126 (SFQVMSRVFLIWAVTHSV). The Lumenal segment spans residues 127–131 (KEVQS). Residues 132–147 (EDSVLLFVIAWTITEI) traverse the membrane as a helical segment. Residues 148 to 170 (IRYSFYTFSLLNHLPYLIKWARY) are Cytoplasmic-facing. Residues 171–188 (TLFIVLYPMGVSGELLTI) form a helical membrane-spanning segment. Catalysis depends on residues Tyr177 and Glu184. At 189 to 218 (YAALPFVRQAGLYSISLPNKYNFSFDYYAF) the chain is on the lumenal side. The tract at residues 199 to 215 (GLYSISLPNKYNFSFDY) is may be involved in interaction with TECR. The N-linked (GlcNAc...) asparagine glycan is linked to Asn210. The helical transmembrane segment at 219-236 (LILIMISYIPIFPQLYFH) threads the bilayer. The Cytoplasmic segment spans residues 237–255 (MIHQRRKILSHTEEHKKFE).

It belongs to the very long-chain fatty acids dehydratase HACD family. In terms of assembly, may interact with enzymes of the ELO family (including ELOVL1); with those enzymes that mediate condensation, the first of the four steps of the reaction cycle responsible for fatty acids elongation, may be part of a larger fatty acids elongase complex. Interacts with BCAP31. Interacts (via the third lumenal loop) with TECR.

The protein resides in the endoplasmic reticulum membrane. It catalyses the reaction a very-long-chain (3R)-3-hydroxyacyl-CoA = a very-long-chain (2E)-enoyl-CoA + H2O. The catalysed reaction is (3R)-hydroxyhexadecanoyl-CoA = (2E)-hexadecenoyl-CoA + H2O. It carries out the reaction (3R)-hydroxyoctadecanoyl-CoA = (2E)-octadecenoyl-CoA + H2O. The enzyme catalyses (3R)-hydroxyeicosanoyl-CoA = (2E)-eicosenoyl-CoA + H2O. It catalyses the reaction (3R)-hydroxydocosanoyl-CoA = (2E)-docosenoyl-CoA + H2O. The catalysed reaction is (3R)-hydroxytetracosanoyl-CoA = (2E)-tetracosenoyl-CoA + H2O. It carries out the reaction (3R)-hydroxyhexacosanoyl-CoA = (2E)-hexacosenoyl-CoA + H2O. It participates in lipid metabolism; fatty acid biosynthesis. Functionally, catalyzes the third of the very long-chain fatty acids (VLCFA) elongation four-step cycle (condensation, reduction, dehydration, and reduction). This endoplasmic reticulum-elongation process is characterized by the addition of two carbons to the lipid chain through each cycle. This enzyme catalyzes the dehydration of the 3-hydroxyacyl-CoA intermediate into trans-2,3-enoyl-CoA, within each cycle of elongation. Therefore, it participates in the production of various VLCFAs involved in multiple biological processes as precursors of membrane lipids and lipid mediators. The chain is Very-long-chain (3R)-3-hydroxyacyl-CoA dehydratase 2 from Pongo abelii (Sumatran orangutan).